We begin with the raw amino-acid sequence, 159 residues long: RNA pyrophosphohydrolase (159 aa).

The Nudix hydrolase domain occupies 6 to 149; sequence GFRPNVGIIL…KREVYRRALK (144 aa). A Nudix box motif is present at residues 38–59; it reads GGINPDETPEDALYRELNEEVG.

The protein belongs to the Nudix hydrolase family. RppH subfamily. A divalent metal cation serves as cofactor.

In terms of biological role, accelerates the degradation of transcripts by removing pyrophosphate from the 5'-end of triphosphorylated RNA, leading to a more labile monophosphorylated state that can stimulate subsequent ribonuclease cleavage. In Pseudomonas entomophila (strain L48), this protein is RNA pyrophosphohydrolase.